The sequence spans 231 residues: Putative 3-methyladenine DNA glycosylase (231 aa).

It belongs to the DNA glycosylase MPG family.

In Pseudomonas fluorescens (strain Pf0-1), this protein is Putative 3-methyladenine DNA glycosylase.